Consider the following 667-residue polypeptide: Bifunctional polymyxin resistance protein ArnA (667 aa).

The formyltransferase ArnAFT stretch occupies residues 1-304; the sequence is MKAIVFAYHD…EMGIVTDVRL (304 aa). The active-site Proton donor; for formyltransferase activity is histidine 104. Residues arginine 114 and 136–140 each bind (6R)-10-formyltetrahydrofolate; that span reads VKKAD. The tract at residues 314-667 is dehydrogenase ArnADH; sequence RRTRVLILGV…TAAPKDELNA (354 aa). NAD(+) is bound by residues aspartate 347 and 368–369; that span reads DI. UDP-alpha-D-glucuronate-binding positions include alanine 393, tyrosine 398, and 432–433; that span reads TS. Residue glutamate 434 is the Proton acceptor; for decarboxylase activity of the active site. UDP-alpha-D-glucuronate is bound by residues arginine 460, asparagine 492, 526–535, and tyrosine 613; that span reads KLVDGGAQKR. The active-site Proton donor; for decarboxylase activity is the arginine 619.

It in the N-terminal section; belongs to the Fmt family. UDP-L-Ara4N formyltransferase subfamily. In the C-terminal section; belongs to the NAD(P)-dependent epimerase/dehydratase family. UDP-glucuronic acid decarboxylase subfamily. Homohexamer, formed by a dimer of trimers.

It catalyses the reaction UDP-alpha-D-glucuronate + NAD(+) = UDP-beta-L-threo-pentopyranos-4-ulose + CO2 + NADH. The enzyme catalyses UDP-4-amino-4-deoxy-beta-L-arabinose + (6R)-10-formyltetrahydrofolate = UDP-4-deoxy-4-formamido-beta-L-arabinose + (6S)-5,6,7,8-tetrahydrofolate + H(+). The protein operates within nucleotide-sugar biosynthesis; UDP-4-deoxy-4-formamido-beta-L-arabinose biosynthesis; UDP-4-deoxy-4-formamido-beta-L-arabinose from UDP-alpha-D-glucuronate: step 1/3. Its pathway is nucleotide-sugar biosynthesis; UDP-4-deoxy-4-formamido-beta-L-arabinose biosynthesis; UDP-4-deoxy-4-formamido-beta-L-arabinose from UDP-alpha-D-glucuronate: step 3/3. It functions in the pathway bacterial outer membrane biogenesis; lipopolysaccharide biosynthesis. In terms of biological role, bifunctional enzyme that catalyzes the oxidative decarboxylation of UDP-glucuronic acid (UDP-GlcUA) to UDP-4-keto-arabinose (UDP-Ara4O) and the addition of a formyl group to UDP-4-amino-4-deoxy-L-arabinose (UDP-L-Ara4N) to form UDP-L-4-formamido-arabinose (UDP-L-Ara4FN). The modified arabinose is attached to lipid A and is required for resistance to polymyxin and cationic antimicrobial peptides. The polypeptide is Bifunctional polymyxin resistance protein ArnA (Yersinia pseudotuberculosis serotype IB (strain PB1/+)).